The following is a 109-amino-acid chain: Iron-sulfur cluster assembly protein CyaY (109 aa).

The protein belongs to the frataxin family.

Its function is as follows. Involved in iron-sulfur (Fe-S) cluster assembly. May act as a regulator of Fe-S biogenesis. This is Iron-sulfur cluster assembly protein CyaY from Shewanella baltica (strain OS155 / ATCC BAA-1091).